We begin with the raw amino-acid sequence, 365 residues long: Succinyl-diaminopimelate desuccinylase (365 aa).

A Zn(2+)-binding site is contributed by His-64. The active site involves Asp-66. Residue Asp-95 coordinates Zn(2+). The Proton acceptor role is filled by Glu-125. 3 residues coordinate Zn(2+): Glu-126, Glu-154, and His-339.

The protein belongs to the peptidase M20A family. DapE subfamily. In terms of assembly, homodimer. Zn(2+) serves as cofactor. The cofactor is Co(2+).

The enzyme catalyses N-succinyl-(2S,6S)-2,6-diaminopimelate + H2O = (2S,6S)-2,6-diaminopimelate + succinate. Its pathway is amino-acid biosynthesis; L-lysine biosynthesis via DAP pathway; LL-2,6-diaminopimelate from (S)-tetrahydrodipicolinate (succinylase route): step 3/3. Its function is as follows. Catalyzes the hydrolysis of N-succinyl-L,L-diaminopimelic acid (SDAP), forming succinate and LL-2,6-diaminopimelate (DAP), an intermediate involved in the bacterial biosynthesis of lysine and meso-diaminopimelic acid, an essential component of bacterial cell walls. This Nautilia profundicola (strain ATCC BAA-1463 / DSM 18972 / AmH) protein is Succinyl-diaminopimelate desuccinylase.